The following is an 825-amino-acid chain: Quinic acid utilization activator (825 aa).

Polar residues predominate over residues 1-12; that stretch reads MSSDTRQTSGGN. The disordered stretch occupies residues 1–45; that stretch reads MSSDTRQTSGGNARSKRRLTDAVDEDGRPTATAEDPTSNPKRQRV. Basic and acidic residues predominate over residues 18–28; the sequence is RLTDAVDEDGR. A DNA-binding region (zn(2)-C6 fungal-type) is located at residues 49–76; that stretch reads CDSCRSKKDKCDGAQPICSTCASLSRPC. 3 disordered regions span residues 160-186, 204-224, and 658-683; these read EQPE…SSVL, QSPL…TTRL, and GSQR…SLPG. A compositionally biased stretch (basic and acidic residues) spans 165–174; that stretch reads DQERSARGEI. The segment covering 658–672 has biased composition (polar residues); it reads GSQRRPRHATQQGTH.

The protein resides in the nucleus. Transcription activation of genes for enzymes and proteins of quinate metabolism by binding to a 16 base-pair sequence (consensus 5'-GGATAANNNNTTATCC-3') in front of each qut gene. The chain is Quinic acid utilization activator (qutA) from Emericella nidulans (strain FGSC A4 / ATCC 38163 / CBS 112.46 / NRRL 194 / M139) (Aspergillus nidulans).